The chain runs to 278 residues: Alcohol dehydrogenase-related 31 kDa protein (278 aa).

An NAD(+)-binding site is contributed by Y11 to L34. Residue S139 participates in substrate binding. Catalysis depends on Y152, which acts as the Proton acceptor.

Belongs to the short-chain dehydrogenases/reductases (SDR) family.

This chain is Alcohol dehydrogenase-related 31 kDa protein (Adhr), found in Drosophila persimilis (Fruit fly).